Consider the following 131-residue polypeptide: Large ribosomal subunit protein mL60 (131 aa).

The N-terminal 12 residues, 1–12, are a transit peptide targeting the mitochondrion; it reads MFGPFKLTSPVA.

This sequence belongs to the mitochondrion-specific ribosomal protein mL60 family. In terms of assembly, component of the mitochondrial large ribosomal subunit (mt-LSU). Mature yeast 74S mitochondrial ribosomes consist of a small (37S) and a large (54S) subunit. The 37S small subunit contains a 15S ribosomal RNA (15S mt-rRNA) and 34 different proteins. The 54S large subunit contains a 21S rRNA (21S mt-rRNA) and 46 different proteins.

It is found in the mitochondrion. Functionally, component of the mitochondrial ribosome (mitoribosome), a dedicated translation machinery responsible for the synthesis of mitochondrial genome-encoded proteins, including at least some of the essential transmembrane subunits of the mitochondrial respiratory chain. The mitoribosomes are attached to the mitochondrial inner membrane and translation products are cotranslationally integrated into the membrane. The chain is Large ribosomal subunit protein mL60 (MRPL31) from Saccharomyces cerevisiae (strain ATCC 204508 / S288c) (Baker's yeast).